The primary structure comprises 130 residues: Small ribosomal subunit protein uS9 (130 aa).

The segment at 109-130 (RAKERKKYGLKAARRAPQFSKR) is disordered. The segment covering 111–130 (KERKKYGLKAARRAPQFSKR) has biased composition (basic residues).

It belongs to the universal ribosomal protein uS9 family.

This is Small ribosomal subunit protein uS9 from Heliobacterium modesticaldum (strain ATCC 51547 / Ice1).